The chain runs to 1305 residues: Adenylate cyclase type 9 (1305 aa).

Over 1–110 (MASPVNQQLL…CFPQTQRRFR (110 aa)) the chain is Cytoplasmic. Residues 46-55 (ISSSCSSGES) are compositionally biased toward low complexity. The disordered stretch occupies residues 46 to 71 (ISSSCSSGESGVKKTGGSGGARRQKK). Residues 111 to 131 (YALMYLSVAGLLWSIYFSVHM) form a helical membrane-spanning segment. The Extracellular segment spans residues 132–134 (KTK). Residues 135-155 (LVSHLVPTLCFLIVCLGFFFF) traverse the membrane as a helical segment. The Cytoplasmic portion of the chain corresponds to 156-164 (TFTKSYARH). The helical transmembrane segment at 165–185 (CTAISLLVTLLVFTLTLASQF) threads the bilayer. Residues 186–209 (QVLNPGLGSDSLSNLTSFSATGSS) lie on the Extracellular side of the membrane. An N-linked (GlcNAc...) asparagine glycan is attached at asparagine 199. The chain crosses the membrane as a helical span at residues 210-229 (SCLSQVGSFSICVEVLLLLY). Residues 230-235 (TVMHLP) are Cytoplasmic-facing. Residues 236 to 253 (LYLSACLGVAYSILFETF) traverse the membrane as a helical segment. Topologically, residues 254–274 (GYHFRDESCFVLLVGRMAHWE) are extracellular. Residues 275 to 295 (LLSKALLHVCIHAIGVHLFIM) traverse the membrane as a helical segment. Over 296-778 (SEVRSRSTFL…VKTFASATFS (483 aa)) the chain is Cytoplasmic. The interval 343 to 369 (QGDDESENSVKRHSASSPKSRKKKSSI) is disordered. Basic residues predominate over residues 353–368 (KRHSASSPKSRKKKSS). 3 residues coordinate Mg(2+): aspartate 393, isoleucine 394, and aspartate 437. Residues 393–398 (DIVGFT), 435–437 (LGD), and arginine 481 each bind ATP. Polar residues-rich tracts occupy residues 607–618 (SDSHTNCTQPET) and 670–680 (ESSTGDTLTNS). The tract at residues 607-680 (SDSHTNCTQP…SSTGDTLTNS (74 aa)) is disordered. A helical transmembrane segment spans residues 779–799 (SLQDVLLNYFIFVLLSVACLL). Residues 800–810 (KPGTNTVSPPT) are Extracellular-facing. A helical membrane pass occupies residues 811–831 (LALVLLSVCGLLGFLSLLVSV). The Cytoplasmic portion of the chain corresponds to 832–859 (RMAFYLEDMLLCTRRLLEIISGWVPRHF). Residues 860 to 880 (IGTVLVCLPAAVIFSYLSSDF) form a helical membrane-spanning segment. At 881–883 (YTD) the chain is on the extracellular side. The chain crosses the membrane as a helical span at residues 884 to 904 (IHYTMFLCSALLIPMVQYCNF). Topologically, residues 905 to 911 (CQLSSSA) are cytoplasmic. Residues 912–932 (LLLATITGATMLILIYLPLCP) form a helical membrane-spanning segment. At 933 to 966 (QRPPLDPGTDIEANLSTSNSSYETLDNPRTELPF) the chain is on the extracellular side. N-linked (GlcNAc...) asparagine glycosylation is found at asparagine 946 and asparagine 951. Residues 967 to 987 (TRLGQEIAVAYFLLLLLVWFL) traverse the membrane as a helical segment. Residues 988 to 1305 (NREFDVSYRL…EERGRDGGAR (318 aa)) are Cytoplasmic-facing. Residues lysine 1099, 1176-1178 (DIW), 1183-1187 (NIASR), and lysine 1223 each bind ATP. The tract at residues 1261-1305 (SIGRSPTDEISSLVTGGKGAVELGSGEAERKREKAEERGRDGGAR) is disordered. A compositionally biased stretch (basic and acidic residues) spans 1287-1305 (EAERKREKAEERGRDGGAR).

Belongs to the adenylyl cyclase class-4/guanylyl cyclase family. It depends on Mg(2+) as a cofactor. The cofactor is Mn(2+). Detected in oocytes.

Its subcellular location is the cell membrane. It carries out the reaction ATP = 3',5'-cyclic AMP + diphosphate. In terms of biological role, adenylyl cyclase that catalyzes the formation of the signaling molecule cAMP in response to activation of G protein-coupled receptors. The protein is Adenylate cyclase type 9 (adcy9) of Xenopus laevis (African clawed frog).